The sequence spans 1046 residues: Suppressor of Mek1 (1046 aa).

A WH1 domain is found at 1–101 (MEPLRKRVKV…QDIWENILQY (101 aa)). The segment at 626–1046 (FESPETSCNN…SSPTPSELHV (421 aa)) is disordered. The segment covering 665 to 689 (IDEEEEEAYFNRDDDSEDSDDEDEL) has biased composition (acidic residues). Residues 695-713 (NNNNNNNNNNKQICTNNEN) show a composition bias toward low complexity. A compositionally biased stretch (basic and acidic residues) spans 714 to 727 (NMEKNDDNIEKDNE). Over residues 743-752 (YEDEDDEDDE) the composition is skewed to acidic residues. Over residues 753-783 (INKSVESDDIVEKHEIIDKNEKKDEIMKENN) the composition is skewed to basic and acidic residues. The segment covering 784–803 (DSDNDDNDNNDNDNDNDNNS) has biased composition (acidic residues). A compositionally biased stretch (low complexity) spans 804–820 (DIENKNHLNNNGNNENN). Basic and acidic residues-rich tracts occupy residues 826–855 (VQDK…KENL) and 862–876 (EKVK…KKEN). The span at 889–905 (SNNSNNNNNNNNNNSNN) shows a compositional bias: low complexity. The span at 909-935 (GDNRKTTPKRKLDYEKNESVVSKKIDK) shows a compositional bias: basic and acidic residues. The segment covering 958–995 (NNNNSNNNNNNNNNNNNNNNNNNNNNNNNNNNNNNNQN) has biased composition (low complexity). Over residues 996–1011 (DENELSSASEEEEEQL) the composition is skewed to acidic residues. A Nuclear localization signal motif is present at residues 1003 to 1022 (ASEEEEEQLENGKHIKKFKR). The span at 1028–1038 (NNSSNNSNNSS) shows a compositional bias: low complexity.

Belongs to the SMEK family. Interacts with ppp4c.

The protein localises to the cytoplasm. It localises to the cell cortex. Its subcellular location is the nucleus. Suppresses MEK1 null cell polarity, chemotaxis, and gene expression defects. Required for proper cytokinesis during vegetative growth, timely exit from the mound stage during development, and myosin II assembly. May be a regulatory subunit of serine/threonine-protein phosphatase 4 (PP4) and may control localization of PP4 to the nucleus. Involved in the regulation of some ppp4c functions, such as developmental progression, chemotaxis, expression of stress response genes and cell movement. The polypeptide is Suppressor of Mek1 (smkA) (Dictyostelium discoideum (Social amoeba)).